We begin with the raw amino-acid sequence, 620 residues long: Carotenoid isomerooxygenase (620 aa).

H211, H267, and H337 together coordinate Fe cation. Residues 440-459 (NGKQATAGEESPKRDAKRGR) form a disordered region. Residues 449 to 459 (ESPKRDAKRGR) are compositionally biased toward basic and acidic residues. H612 is a binding site for Fe cation.

It belongs to the carotenoid oxygenase family. It depends on Fe(2+) as a cofactor. As to expression, expression follows organogenesis of the larval Bolwig's organ (BO), which mediates larval photophobic behavior. In the adult, expression is restricted exclusively to the brain. Expressed in both neuronal cells and glia cells. Not active within photoreceptors. Active within neuronal cells within the central nervous system.

It carries out the reaction all-trans-zeaxanthin + O2 = (3R)-11-cis-3-hydroxyretinal + (3R)-all-trans-3-hydroxyretinal. Its pathway is cofactor metabolism; retinol metabolism. Its function is as follows. Catalyzes the oxidative cleavage at the 15,15'-double bond of carotenoids and the simultaneous all-trans to 11-cis isomerization of one cleavage product. Carotenoids like 11-cis retinal can promote visual pigment biogenesis in the dark. Essential for the biosynthesis of the 3-hydroxyretinal chromophore of rhodopsin from zeaxanthin and for proper photoreceptor development. Also essential for larval light perception. This Drosophila melanogaster (Fruit fly) protein is Carotenoid isomerooxygenase (ninaB).